The primary structure comprises 244 residues: Futalosine hydrolase (244 aa).

Belongs to the PNP/UDP phosphorylase family. Futalosine hydrolase subfamily.

The enzyme catalyses futalosine + H2O = dehypoxanthine futalosine + hypoxanthine. It participates in quinol/quinone metabolism; menaquinone biosynthesis. Functionally, catalyzes the hydrolysis of futalosine (FL) to dehypoxanthine futalosine (DHFL) and hypoxanthine, a step in the biosynthesis of menaquinone (MK, vitamin K2). Cannot directly use aminodeoxyfutalosine (AFL) as a substrate. The sequence is that of Futalosine hydrolase from Acidothermus cellulolyticus (strain ATCC 43068 / DSM 8971 / 11B).